Consider the following 80-residue polypeptide: Protein CEBPZOS (80 aa).

Residues G15 to F31 traverse the membrane as a helical segment.

The protein resides in the mitochondrion membrane. The sequence is that of Protein CEBPZOS from Mus musculus (Mouse).